We begin with the raw amino-acid sequence, 613 residues long: Portal protein (613 aa).

The interval 577-613 (ATGGDHGIRQAPSARGDTEPDHAKSKPARDPPPGAGS) is disordered. Positions 592–605 (GDTEPDHAKSKPAR) are enriched in basic and acidic residues.

It belongs to the herpesviridae portal protein family. In terms of assembly, homododecamerizes. Interacts with terminase subunits TRM1 and TRM3.

It is found in the virion. It localises to the host nucleus. The protein resides in the host cytoplasm. Forms a portal in the viral capsid through which viral DNA is translocated during DNA packaging. Assembles as a dodecamer at a single fivefold axe of the T=16 icosahedric capsid. Binds to the molecular motor that translocates the viral DNA, termed terminase. The polypeptide is Portal protein (Epstein-Barr virus (strain B95-8) (HHV-4)).